The primary structure comprises 269 residues: MWAIAGLISVLLAQAAAFDCSAKELEHYNFELLKGIHSVTSLKDTPPSQTNLTWYFGICEPIKEGLDACPQNSDVCGITSIILKGDSKNRVISEIVSFNTNLQKTYEPFSDSEIDSTGIAISYTGATWGDNSINAALRFVCPPKNNEHILDKFKLDSWDGKKLKASMYSKAACITSDKDKLKPPPKKPDNGESWGWFTWIFIFLVLFLSIYIVGGAWFQYNKGNAIDFSSALREVLDNFVELLKGIPAFSREIIEKFTSNSNRGEYSAV.

The signal sequence occupies residues 1 to 17 (MWAIAGLISVLLAQAAA). In terms of domain architecture, MRH spans 18-175 (FDCSAKELEH…SMYSKAACIT (158 aa)). At 18–193 (FDCSAKELEH…PPKKPDNGES (176 aa)) the chain is on the lumenal side. 3 cysteine pairs are disulfide-bonded: Cys20/Cys59, Cys69/Cys76, and Cys141/Cys173. Residues 194–214 (WGWFTWIFIFLVLFLSIYIVG) form a helical membrane-spanning segment. At 215-269 (GAWFQYNKGNAIDFSSALREVLDNFVELLKGIPAFSREIIEKFTSNSNRGEYSAV) the chain is on the cytoplasmic side.

The protein belongs to the ATG27 family.

It localises to the cytoplasmic vesicle membrane. The protein localises to the golgi apparatus membrane. The protein resides in the mitochondrion membrane. It is found in the preautophagosomal structure membrane. Functionally, effector of VPS34 phosphatidylinositol 3-phosphate kinase signaling. Regulates the cytoplasm to vacuole transport (Cvt) vesicle formation. Plays a role in ATG protein retrieval from the pre-autophagosomal structure (PAS) and is especially required for autophagy-dependent cycling of ATG9. The chain is Autophagy-related protein 27 (ATG27) from Scheffersomyces stipitis (strain ATCC 58785 / CBS 6054 / NBRC 10063 / NRRL Y-11545) (Yeast).